The primary structure comprises 431 residues: Mothers against decapentaplegic homolog 6 (431 aa).

The segment covering 1–15 (MFRSKRSGLVRRLWR) has biased composition (basic residues). The disordered stretch occupies residues 1–95 (MFRSKRSGLV…SPPGPGGGEA (95 aa)). The span at 29-38 (GQSSERNATA) shows a compositional bias: polar residues. Pro residues predominate over residues 71 to 90 (PELPPPPPPPPPGGASPPGP). An MH1 domain is found at 85–209 (ASPPGPGGGE…FSRLCGPESP (125 aa)). Residues C139, C182, C194, and H199 each coordinate Zn(2+). The span at 235 to 245 (TETEATNSPNV) shows a compositional bias: polar residues. The disordered stretch occupies residues 235–258 (TETEATNSPNVTPGEFSDASTSPD). Residues 265-431 (WCNVAYWEHR…WLEILLSNNR (167 aa)) form the MH2 domain.

It belongs to the dwarfin/SMAD family. In terms of tissue distribution, developing heart, eyes and limbs.

Its subcellular location is the nucleus. In terms of biological role, transforming growth factor-beta superfamily receptors signaling occurs through the Smad family of intracellular mediators. SMAD6 is an inhibitory Smad (i-Smad) that negatively regulates signaling downstream of type I transforming growth factor-beta. Acts as a mediator of TGF-beta and BMP anti-inflammatory activities. Suppresses IL1R-TLR signaling through its direct interaction with PEL1, preventing NF-kappa-B activation, nuclear transport and NF-kappa-B-mediated expression of pro-inflammatory genes. Blocks the BMP-SMAD1 signaling pathway by competing with SMAD4 for receptor-activated SMAD1-binding. Binds to regulatory elements in target promoter regions. The sequence is that of Mothers against decapentaplegic homolog 6 (SMAD6) from Gallus gallus (Chicken).